A 102-amino-acid polypeptide reads, in one-letter code: Thioredoxin (102 aa).

In terms of domain architecture, Thioredoxin spans 2–102 (VTEIKSLKQL…KAKIVQLVSQ (101 aa)). Residues C30 and C33 are joined by a disulfide bond.

The protein belongs to the thioredoxin family.

Participates in various redox reactions through the reversible oxidation of its active center dithiol to a disulfide and catalyzes dithiol-disulfide exchange reactions. The polypeptide is Thioredoxin (trxA) (Mycoplasma pneumoniae (strain ATCC 29342 / M129 / Subtype 1) (Mycoplasmoides pneumoniae)).